The sequence spans 101 residues: NAD(P)H-quinone oxidoreductase subunit 4L, chloroplastic (101 aa).

2 consecutive transmembrane segments (helical) span residues 2–22 (MFEH…YGLI) and 61–81 (IFSI…LAIV).

This sequence belongs to the complex I subunit 4L family. As to quaternary structure, NDH is composed of at least 16 different subunits, 5 of which are encoded in the nucleus.

The protein localises to the plastid. It is found in the chloroplast thylakoid membrane. It carries out the reaction a plastoquinone + NADH + (n+1) H(+)(in) = a plastoquinol + NAD(+) + n H(+)(out). It catalyses the reaction a plastoquinone + NADPH + (n+1) H(+)(in) = a plastoquinol + NADP(+) + n H(+)(out). Functionally, NDH shuttles electrons from NAD(P)H:plastoquinone, via FMN and iron-sulfur (Fe-S) centers, to quinones in the photosynthetic chain and possibly in a chloroplast respiratory chain. The immediate electron acceptor for the enzyme in this species is believed to be plastoquinone. Couples the redox reaction to proton translocation, and thus conserves the redox energy in a proton gradient. In Dioscorea elephantipes (Elephant's foot yam), this protein is NAD(P)H-quinone oxidoreductase subunit 4L, chloroplastic.